The following is a 215-amino-acid chain: MADKSDLNALSGRFRGYYPVVIDVETAGFNAQSDALLEIAAVTLQMNKEGWLLPDETLHFHVEPFEGANLQPEALAFNGIDPTNPLRGAVSEHDALHAIFKAVRKGIKDKGCNRAIIVAHNANFDHSFVMAAAERASLKRNPFHPFATFDTAALSGLVLGQTVLAKACLAAGIPFDSSQAHSALYDTLQTAKLFCELVNRWKKLGGWPLPAAESE.

Positions 20–194 constitute an Exonuclease domain; that stretch reads VVIDVETAGF…YDTLQTAKLF (175 aa). Asp-23, Glu-25, His-181, and Asp-186 together coordinate Mg(2+). Residue His-181 is the Proton donor/acceptor of the active site.

This sequence belongs to the RNase T family. In terms of assembly, homodimer. Mg(2+) is required as a cofactor.

Its function is as follows. Trims short 3' overhangs of a variety of RNA species, leaving a one or two nucleotide 3' overhang. Responsible for the end-turnover of tRNA: specifically removes the terminal AMP residue from uncharged tRNA (tRNA-C-C-A). Also appears to be involved in tRNA biosynthesis. The protein is Ribonuclease T of Yersinia pseudotuberculosis serotype O:1b (strain IP 31758).